A 68-amino-acid chain; its full sequence is Suppressor of RNA silencing (68 aa).

A helical transmembrane segment spans residues 23–43 (LLTMSGAYVNVCVCIVFFILV).

This sequence belongs to the virgaviridae suppressor of RNA silencing family.

Its subcellular location is the host endoplasmic reticulum membrane. Its function is as follows. Suppressor of RNA-mediated gene silencing, also known as post-transcriptional gene silencing (PTGS), a mechanism of plant viral defense that performs sequence-specific inhibition of viral mRNAs expression. The RNA silencing suppression activity is variable depending on the origin of the isolate. The protein is Suppressor of RNA silencing (8K protein) of Solanum nigrum (Black nightshade).